The primary structure comprises 113 residues: Large ribosomal subunit protein bL17 (113 aa).

It belongs to the bacterial ribosomal protein bL17 family. As to quaternary structure, part of the 50S ribosomal subunit. Contacts protein L32.

This Clostridium botulinum (strain ATCC 19397 / Type A) protein is Large ribosomal subunit protein bL17.